Consider the following 161-residue polypeptide: Small ribosomal subunit protein uS9 (161 aa).

Residues 1-21 show a composition bias toward polar residues; the sequence is MATLQSLADLNRANTQTSNPE. Residues 1-25 form a disordered region; the sequence is MATLQSLADLNRANTQTSNPENEAP.

Belongs to the universal ribosomal protein uS9 family.

This Methylorubrum extorquens (strain CM4 / NCIMB 13688) (Methylobacterium extorquens) protein is Small ribosomal subunit protein uS9.